We begin with the raw amino-acid sequence, 1163 residues long: Type IV pilus biogenesis factor PilY1 (1163 aa).

An N-terminal signal peptide occupies residues 1–30; the sequence is MKSALHQIGKTSLAAALSGAVLLSAQTTHA. Positions 329 to 352 are disordered; that stretch reads SVGNADSTSRSLPDGKSYSSQTPY. Ca(2+)-binding residues include Asp600, Asp602, Asn604, and Asp608. Residues 619-621 are integrin-binding motif RGD; it reads RGD. Asp851, Asn853, Asp855, Val857, and Asp859 together coordinate Ca(2+). Residues 1138 to 1163 form a disordered region; that stretch reads SGECLTVNPGPNTRGRQNWRPIEGKN.

The protein belongs to the PilY1 family. As to quaternary structure, interacts (via C-terminal 532-1163) with host integrins alpha-V/beta-3 (ITGAV/ITGB3) and alpha-V/beta-5 (ITGAV/ITGB5).

It localises to the fimbrium. The protein localises to the membrane. It is found in the cytoplasm. The protein resides in the cytosol. Involved in pilus assembly, twitching motility and adhesion to host cells. Primes type IV pili (T4P) assembly and is required for inclusion of minor pilins PilV, PilW and PilX to the surface pili. Stabilizes assembled pilus fibers likely by antagonizing retraction mediated by PilT. Calcium-binding and calcium release by PilY1 seem to be essential for twitching motility and for regulation of pilus retraction dynamics of PilT. Adhesin for human tissue specifically recognizing a host receptor localized or enriched on basolateral epithelial cell surfaces. Binds host integrins in an calcium-dependent manner in vitro and this interaction may be employed by the bacterium to mediate host epithelial cell binding in vivo. This is Type IV pilus biogenesis factor PilY1 from Pseudomonas aeruginosa (strain PAK).